Consider the following 660-residue polypeptide: Translation factor GUF1 homolog, mitochondrial (660 aa).

The region spanning 62–243 (EKIRNFSIIA…TIIEKIPPPT (182 aa)) is the tr-type G domain. GTP contacts are provided by residues 71-78 (AHIDHGKS), 136-140 (DTPGH), and 190-193 (NKID).

This sequence belongs to the TRAFAC class translation factor GTPase superfamily. Classic translation factor GTPase family. LepA subfamily.

The protein localises to the mitochondrion inner membrane. The catalysed reaction is GTP + H2O = GDP + phosphate + H(+). In terms of biological role, promotes mitochondrial protein synthesis. May act as a fidelity factor of the translation reaction, by catalyzing a one-codon backward translocation of tRNAs on improperly translocated ribosomes. Binds to mitochondrial ribosomes in a GTP-dependent manner. This chain is Translation factor GUF1 homolog, mitochondrial, found in Trichoplax adhaerens (Trichoplax reptans).